The chain runs to 495 residues: Tripartite motif-containing protein 5 (495 aa).

An N-acetylalanine modification is found at Ala2. An RING-type zinc finger spans residues 15–60 (CPICLELLTEPLSLHCGHSFCQACITANHKKSMLYKEGERSCPVCR). Ser87 carries the post-translational modification Phosphoserine. Residues 92–133 (QKVDHCARHGEKLLLFCQEDSKVICWLCERSQEHRGHHTFLM) form a B box-type zinc finger. Residues Cys97, His100, Cys119, and His125 each coordinate Zn(2+). The stretch at 137–223 (AQEYHVKLQT…KSLTKSETKM (87 aa)) forms a coiled coil. Residues 187-200 (FEQLREILDREESN) form a required for interaction with GABARAP and for autophagy region. The B30.2/SPRY domain occupies 283 to 495 (LKGMLDMFRE…VPMTLCSPSS (213 aa)).

Belongs to the TRIM/RBCC family. In terms of assembly, can form homodimers and homotrimers. In addition to lower-order dimerization, also exhibits a higher-order multimerization and both low- and high-order multimerizations are essential for its restriction activity. Interacts with BTBD1 and BTBD2. Interacts with PSMC4, PSMC5, PSMD7 and HSPA8/HSC70. Interacts (via B30.2/SPRY domain) with HSPA1A/B. Interacts with PSMC2, MAP3K7/TAK1, TAB2 and TAB3. Interacts with SQSTM1. Interacts with TRIM6 and TRIM34. Interacts with ULK1 (phosphorylated form), GABARAP, GABARAPL1, GABARAPL2, MAP1LC3A, MAP1LC3C and BECN1. Degraded in a proteasome-independent fashion in the absence of viral infection but in a proteasome-dependent fashion following exposure to restriction sensitive virus. Post-translationally, autoubiquitinated in a RING finger- and UBE2D2-dependent manner. Monoubiquitinated by TRIM21. Deubiquitinated by Yersinia YopJ. Ubiquitination may not lead to proteasomal degradation.

Its subcellular location is the cytoplasm. The protein resides in the nucleus. It catalyses the reaction S-ubiquitinyl-[E2 ubiquitin-conjugating enzyme]-L-cysteine + [acceptor protein]-L-lysine = [E2 ubiquitin-conjugating enzyme]-L-cysteine + N(6)-ubiquitinyl-[acceptor protein]-L-lysine.. It participates in protein modification; protein ubiquitination. Functionally, capsid-specific restriction factor that prevents infection from non-host-adapted retroviruses. Blocks viral replication early in the life cycle, after viral entry but before reverse transcription. In addition to acting as a capsid-specific restriction factor, also acts as a pattern recognition receptor that activates innate immune signaling in response to the retroviral capsid lattice. Binding to the viral capsid triggers its E3 ubiquitin ligase activity, and in concert with the heterodimeric ubiquitin conjugating enzyme complex UBE2V1-UBE2N (also known as UBC13-UEV1A complex) generates 'Lys-63'-linked polyubiquitin chains, which in turn are catalysts in the autophosphorylation of the MAP3K7/TAK1 complex (includes TAK1, TAB2, and TAB3). Activation of the MAP3K7/TAK1 complex by autophosphorylation results in the induction and expression of NF-kappa-B and MAPK-responsive inflammatory genes, thereby leading to an innate immune response in the infected cell. Plays a role in regulating autophagy through activation of autophagy regulator BECN1 by causing its dissociation from its inhibitors BCL2 and TAB2. The protein is Tripartite motif-containing protein 5 (TRIM5) of Macaca nemestrina (Pig-tailed macaque).